We begin with the raw amino-acid sequence, 527 residues long: Exodeoxyribonuclease 7 large subunit (527 aa).

The interval 499–527 (AGEEGAPPPAAPKKRASRPVVPTKQGSLF) is disordered.

The protein belongs to the XseA family. Heterooligomer composed of large and small subunits.

The protein localises to the cytoplasm. The catalysed reaction is Exonucleolytic cleavage in either 5'- to 3'- or 3'- to 5'-direction to yield nucleoside 5'-phosphates.. Functionally, bidirectionally degrades single-stranded DNA into large acid-insoluble oligonucleotides, which are then degraded further into small acid-soluble oligonucleotides. This Sinorhizobium fredii (strain NBRC 101917 / NGR234) protein is Exodeoxyribonuclease 7 large subunit.